The sequence spans 523 residues: Frizzled-2 (523 aa).

Positions 1 to 120 (PDHGFCQPIS…HGAEQICVGQ (120 aa)) constitute an FZ domain. Residues 1 to 205 (PDHGFCQPIS…EDEIRFARVW (205 aa)) are Extracellular-facing. Cystine bridges form between C6/C67, C14/C60, C51/C88, C77/C117, and C81/C105. N20 carries N-linked (GlcNAc...) asparagine glycosylation. A glycan (N-linked (GlcNAc...) asparagine) is linked at N121. A helical membrane pass occupies residues 206 to 226 (ILVWSVLCCASTFFTVTTYLV). At 227-237 (DMQRFRYPERP) the chain is on the cytoplasmic side. The helical transmembrane segment at 238 to 258 (IIFLSGCYTMVSVAYIAGFVL) threads the bilayer. Residues 259 to 285 (EERVVCNERFQEDGYRTVVQGTKKEGC) are Extracellular-facing. A helical membrane pass occupies residues 286 to 306 (TILFMMLYFFSMASSIWWVIL). Residues 307 to 328 (SLTWFLAAGMKWGHEAIEANSQ) lie on the Cytoplasmic side of the membrane. Residues 329–349 (YFHLAAWAVPAVKTITILAMG) traverse the membrane as a helical segment. At 350–372 (QIDGDLLSGVCFVGLNGIDPLRG) the chain is on the extracellular side. The chain crosses the membrane as a helical span at residues 373 to 393 (FVLAPLFVYLFIGTSFLLAGF). Over 394 to 419 (VSLFRIRTIMKHGGTKTEKLERLMVR) the chain is Cytoplasmic. A helical membrane pass occupies residues 420–440 (IGVFSVLYTVPATIVIACYFY). At 441 to 477 (EQAFRQHWERSWISQHCKSLAIPCPLHFTPRMTPDFT) the chain is on the extracellular side. A helical transmembrane segment spans residues 478-498 (VYMIKYLMTLIVGITSGFWIF). Residues 499 to 523 (SGKTLHSWRKFYTRLTNSRQGETTV) lie on the Cytoplasmic side of the membrane. The Lys-Thr-X-X-X-Trp motif, mediates interaction with the PDZ domain of Dvl family members motif lies at 501-506 (KTLHSW). Positions 521 to 523 (TTV) match the PDZ-binding motif.

Belongs to the G-protein coupled receptor Fz/Smo family. As to expression, expressed in the developing head and limbs. Expressed broadly in cranial ectoderm. Also expressed in the developing somites (dermomyotome) and in other cranial placodes, including the olfactory, lens, and otic placodes (rostral rim of the vesicle).

It is found in the membrane. The protein localises to the cell membrane. In terms of biological role, receptor for Wnt proteins. Most of frizzled receptors are coupled to the beta-catenin canonical signaling pathway, which leads to the activation of disheveled proteins, inhibition of GSK-3 kinase, nuclear accumulation of beta-catenin and activation of Wnt target genes. A second signaling pathway involving PKC and calcium fluxes has been seen for some family members, but it is not yet clear if it represents a distinct pathway or if it can be integrated in the canonical pathway, as PKC seems to be required for Wnt-mediated inactivation of GSK-3 kinase. Both pathways seem to involve interactions with G-proteins. May be involved in transduction and intercellular transmission of polarity information during tissue morphogenesis and/or in differentiated tissues. The chain is Frizzled-2 (FZD2) from Gallus gallus (Chicken).